The primary structure comprises 316 residues: Coiled-coil domain-containing protein 42 (316 aa).

Coiled-coil stretches lie at residues 43–151 (RLLE…EYSI) and 182–236 (HHDL…SDVI).

The protein belongs to the CFAP73 family. Interacts with ODF1 and ODF2. Interacts with CCDC38. Interacts with CCDC146. Interacts with CFAP53.

It localises to the cytoplasm. It is found in the perinuclear region. Its subcellular location is the cytoskeleton. The protein localises to the cell projection. The protein resides in the cilium. It localises to the flagellum. It is found in the microtubule organizing center. Its subcellular location is the centrosome. Essential for male fertility. Required for sperm development. The polypeptide is Coiled-coil domain-containing protein 42 (Bos taurus (Bovine)).